We begin with the raw amino-acid sequence, 437 residues long: uncharacterized protein (437 aa).

Positions 63-87 are enriched in polar residues; sequence PSSANVSFQNSDDNLSTSRGRSASP. Disordered regions lie at residues 63-97, 112-147, and 346-437; these read PSSA…SNFP, VKKD…KKET, and PKNA…YSIW. The span at 399–409 shows a compositional bias: polar residues; the sequence is EALSPSKSNPD. The span at 425–437 shows a compositional bias: low complexity; the sequence is KKPSSSSSNYSIW.

This is an uncharacterized protein from Caenorhabditis elegans.